Here is a 353-residue protein sequence, read N- to C-terminus: Photosystem II D2 protein (353 aa).

The residue at position 2 (Thr2) is an N-acetylthreonine. Thr2 is modified (phosphothreonine). The chain crosses the membrane as a helical span at residues 41-61 (CAYFALGGWFTGTTFVTSWYT). His118 provides a ligand contact to chlorophyll a. A helical membrane pass occupies residues 125 to 141 (GFMLRQFELARSVQLRP). Residues Gln130 and Asn143 each coordinate pheophytin a. A helical membrane pass occupies residues 153–166 (VFVSVFLIYPLGQS). His198 contributes to the chlorophyll a binding site. A helical membrane pass occupies residues 208-228 (AALLCAIHGATVENTLFEDGD). A plastoquinone-binding residues include His215 and Phe262. His215 contacts Fe cation. Residue His269 participates in Fe cation binding. The chain crosses the membrane as a helical span at residues 279 to 295 (GLWMSALGVVGLALNLR).

It belongs to the reaction center PufL/M/PsbA/D family. As to quaternary structure, PSII is composed of 1 copy each of membrane proteins PsbA, PsbB, PsbC, PsbD, PsbE, PsbF, PsbH, PsbI, PsbJ, PsbK, PsbL, PsbM, PsbT, PsbX, PsbY, PsbZ, Psb30/Ycf12, at least 3 peripheral proteins of the oxygen-evolving complex and a large number of cofactors. It forms dimeric complexes. Interacts with PAM68. The D1/D2 heterodimer binds P680, chlorophylls that are the primary electron donor of PSII, and subsequent electron acceptors. It shares a non-heme iron and each subunit binds pheophytin, quinone, additional chlorophylls, carotenoids and lipids. There is also a Cl(-1) ion associated with D1 and D2, which is required for oxygen evolution. The PSII complex binds additional chlorophylls, carotenoids and specific lipids. serves as cofactor. Post-translationally, phosphorylation occurs in normal plant growth light conditions. Rapid dephosphorylation occurs during heat shock.

The protein localises to the plastid. It localises to the chloroplast thylakoid membrane. It catalyses the reaction 2 a plastoquinone + 4 hnu + 2 H2O = 2 a plastoquinol + O2. Functionally, photosystem II (PSII) is a light-driven water:plastoquinone oxidoreductase that uses light energy to abstract electrons from H(2)O, generating O(2) and a proton gradient subsequently used for ATP formation. It consists of a core antenna complex that captures photons, and an electron transfer chain that converts photonic excitation into a charge separation. The D1/D2 (PsbA/PsbD) reaction center heterodimer binds P680, the primary electron donor of PSII as well as several subsequent electron acceptors. D2 is needed for assembly of a stable PSII complex. This Arabidopsis thaliana (Mouse-ear cress) protein is Photosystem II D2 protein.